Reading from the N-terminus, the 189-residue chain is Protein Rex (189 aa).

A compositionally biased stretch (basic residues) spans 1 to 16 (MPKTRRRPRRSQRKRP). The disordered stretch occupies residues 1–27 (MPKTRRRPRRSQRKRPPTPWPTSQGLD). The Nuclear localization signal, and RNA-binding (RxRE) motif lies at 2-18 (PKTRRRPRRSQRKRPPT). The tract at residues 56–70 (RPAYIVTPYWPPVQS) is homomultimerization. Ser-70 carries the post-translational modification Phosphoserine; by host. The interval 73–189 (SPGTPSMDAL…PPSPGPSCPT (117 aa)) is disordered. Residues 80–94 (DALSAQLYSSLSLDS) show a composition bias toward low complexity. The short motif at 82–93 (LSAQLYSSLSLD) is the Nuclear export signal element. The segment at 123 to 131 (PSSRPCANT) is homomultimerization. The span at 143–164 (LGSTSQPCLFQTPDSGPKTCTP) shows a compositional bias: polar residues. Thr-174 carries the phosphothreonine; by host modification. Ser-177 carries the post-translational modification Phosphoserine; by host. Residues 178 to 189 (FPPPSPGPSCPT) show a composition bias toward pro residues.

Belongs to the deltaretrovirus Rex protein family. Homomultimer. Multimeric assembly is essential for activity and involves XPO1. Binds to human XPO1 and KPNB1. Interacts (via N-terminal nuclear localization signal) with human NPM1.

The protein localises to the host nucleus. The protein resides in the host nucleolus. It is found in the host cytoplasm. Its function is as follows. Rex escorts unspliced gag-pro-pol and singly spliced env mRNAs out of the nucleus of infected cells. These mRNAs carry a recognition sequence called Rex responsive element (RxRE or XRE) located at the 3' region of the long terminal repeat (LTR). This function is essential since most HTLV proteins are translated from unspliced or partially spliced pre-mRNAs that cannot exit the nucleus by the pathway used by fully processed cellular mRNAs. Rex itself is translated from a fully spliced mRNA that probably readily exits the nucleus. Rex's nuclear localization signal (NLS) binds directly to KPNB1/importin beta-1 without previous binding to KPNA1/importin alpha-1. KPNB1 binds to the GDP bound form of RAN (Ran-GDP) and targets Rex to the nucleus. In the nucleus, the conversion from Ran-GDP to Ran-GTP dissociates Rex from KPNB1 and allows Rex's binding to the RRE in viral pre-mRNAs. Rex multimerizes on the RRE via cooperative assembly. This multimerization is critical for its full biological activity, since it may shield the viral RNA from being spliced or down-regulated, and probably exposes Rex's nuclear export signal (NES) to the surface. Rex can then form a complex with XPO1/CRM1, RANBP3 and Ran-GTP, leading to nuclear export of the complex. Conversion from Ran-GTP to Ran-GDP mediates dissociation of the Rex/RRE/XPO1/RANBP3/RAN complex, so that Rex can return to the nucleus for a subsequent round of export. The polypeptide is Protein Rex (Human T-cell leukemia virus 1 (strain Japan ATK-1 subtype A) (HTLV-1)).